Consider the following 388-residue polypeptide: Branched-chain-amino-acid aminotransferase 2, chloroplastic (388 aa).

The transit peptide at 1–22 (MIKTITSLRKTLVLPLHLHIRT) directs the protein to the chloroplast. Lys-235 is modified (N6-(pyridoxal phosphate)lysine).

It belongs to the class-IV pyridoxal-phosphate-dependent aminotransferase family. Pyridoxal 5'-phosphate serves as cofactor.

The protein resides in the plastid. It localises to the chloroplast. It carries out the reaction L-leucine + 2-oxoglutarate = 4-methyl-2-oxopentanoate + L-glutamate. The catalysed reaction is L-isoleucine + 2-oxoglutarate = (S)-3-methyl-2-oxopentanoate + L-glutamate. It catalyses the reaction L-valine + 2-oxoglutarate = 3-methyl-2-oxobutanoate + L-glutamate. The protein operates within amino-acid biosynthesis; L-isoleucine biosynthesis; L-isoleucine from 2-oxobutanoate: step 4/4. It functions in the pathway amino-acid biosynthesis; L-leucine biosynthesis; L-leucine from 3-methyl-2-oxobutanoate: step 4/4. It participates in amino-acid biosynthesis; L-valine biosynthesis; L-valine from pyruvate: step 4/4. Converts 2-oxo acids to branched-chain amino acids. Shows activity with L-Leu, L-Ile and L-Val as amino donors and 2-oxoglutarate as an amino acceptor, but no activity for D-isomers of Leu, Ile, Val, Asp, Glu or Ala. In Arabidopsis thaliana (Mouse-ear cress), this protein is Branched-chain-amino-acid aminotransferase 2, chloroplastic (BCAT2).